The chain runs to 597 residues: Alpha-1,2-mannosyltransferase MNN2 (597 aa).

Topologically, residues M1–K6 are cytoplasmic. The chain crosses the membrane as a helical span at residues I7–N27. Residues V28–S597 are Extracellular-facing. The disordered stretch occupies residues L39 to P89. Residue N382 is glycosylated (N-linked (GlcNAc...) asparagine).

The protein belongs to the MNN1/MNT family. Requires Mn(2+) as cofactor.

It localises to the golgi apparatus membrane. Its pathway is protein modification; protein glycosylation. With respect to regulation, enzyme activity is regulated by iron. In terms of biological role, alpha-1,2-mannosyltransferase required for cell wall integrity. Responsible for addition of the first alpha-1,2-linked mannose to form the branches on the mannan backbone of oligosaccharides. Addition of alpha-1,2-mannose is required for stabilization of the alpha-1,6-mannose backbone and hence regulates mannan fibril length; and is important for both immune recognition and virulence. Promotes iron uptake and usage along the endocytosis pathway under iron-limiting conditions. The protein is Alpha-1,2-mannosyltransferase MNN2 (MNN2) of Candida albicans (strain SC5314 / ATCC MYA-2876) (Yeast).